We begin with the raw amino-acid sequence, 345 residues long: uncharacterized protein (345 aa).

8 helical membrane-spanning segments follow: residues Val-9 to Val-31, Thr-84 to Leu-103, Tyr-116 to Thr-138, Val-148 to Phe-170, Val-182 to Ala-204, Trp-269 to Gly-286, Ile-291 to Tyr-308, and His-313 to Ile-335.

The protein localises to the cell membrane. This is an uncharacterized protein from Treponema pallidum (strain Nichols).